The primary structure comprises 145 residues: tRNA-specific adenosine deaminase (145 aa).

The CMP/dCMP-type deaminase domain maps to 1-116 (MREALKQAEI…SNLRYFNSKA (116 aa)). Position 48 (H48) interacts with Zn(2+). E50 (proton donor) is an active-site residue. Residues C78 and C81 each contribute to the Zn(2+) site.

It belongs to the cytidine and deoxycytidylate deaminase family. Homodimer. Requires Zn(2+) as cofactor.

The catalysed reaction is adenosine(34) in tRNA + H2O + H(+) = inosine(34) in tRNA + NH4(+). Catalyzes the deamination of adenosine to inosine at the wobble position 34 of tRNA(Arg2). In Rickettsia bellii (strain RML369-C), this protein is tRNA-specific adenosine deaminase.